An 86-amino-acid chain; its full sequence is Large ribosomal subunit protein bL27 (86 aa).

Residues 1–10 are compositionally biased toward gly residues; that stretch reads MAQKKGGGST. A disordered region spans residues 1-22; the sequence is MAQKKGGGSTRNGRDSESKRLG.

The protein belongs to the bacterial ribosomal protein bL27 family.

This chain is Large ribosomal subunit protein bL27, found in Polynucleobacter asymbioticus (strain DSM 18221 / CIP 109841 / QLW-P1DMWA-1) (Polynucleobacter necessarius subsp. asymbioticus).